The chain runs to 77 residues: uncharacterized protein (77 aa).

The 55-residue stretch at 13–67 (VLQYMVNNDYSLNQLALEIGVSPATLSRVLNGERRPGQLVIGKMLHYFNLKFEDL) folds into the HTH cro/C1-type domain. Residues 24-43 (LNQLALEIGVSPATLSRVLN) constitute a DNA-binding region (H-T-H motif).

Its subcellular location is the cytoplasm. This is an uncharacterized protein from Bacillus subtilis (strain 168).